A 1524-amino-acid polypeptide reads, in one-letter code: DNA-directed RNA polymerase subunit beta' (1524 aa).

Zn(2+)-binding residues include C58, C60, C73, and C76. Residues D739, D741, and D743 each coordinate Mg(2+). Zn(2+)-binding residues include C1112, C1194, C1201, and C1204. Residues 1501–1524 (EAVEAKERPAARRGVKREQPGKQA) form a disordered region.

Belongs to the RNA polymerase beta' chain family. As to quaternary structure, the RNAP catalytic core consists of 2 alpha, 1 beta, 1 beta' and 1 omega subunit. When a sigma factor is associated with the core the holoenzyme is formed, which can initiate transcription. The cofactor is Mg(2+). Zn(2+) serves as cofactor.

The enzyme catalyses RNA(n) + a ribonucleoside 5'-triphosphate = RNA(n+1) + diphosphate. Functionally, DNA-dependent RNA polymerase catalyzes the transcription of DNA into RNA using the four ribonucleoside triphosphates as substrates. The polypeptide is DNA-directed RNA polymerase subunit beta' (Thermus thermophilus (strain ATCC BAA-163 / DSM 7039 / HB27)).